Reading from the N-terminus, the 414-residue chain is Serine/threonine transporter SstT (414 aa).

Transmembrane regions (helical) follow at residues 16–36 (GSLVKQILVGLVLGILLAWIS), 46–66 (LGTLFVGALKAVAPVLVLMLV), 84–104 (ILFLYLLGTFSAALAAVVFSF), 143–163 (ALLNANYIGILVWAVGLGFAL), 180–200 (AVTFMVKLVIRFAPVGIFGLV), 219–239 (LVVLIGCMLLVALVVNPLLVF), 300–320 (MAGAAITITVLTLAAVHTLGV), and 332–352 (VVASLCACGASGVAGGSLLLI).

It belongs to the dicarboxylate/amino acid:cation symporter (DAACS) (TC 2.A.23) family.

Its subcellular location is the cell inner membrane. The enzyme catalyses L-serine(in) + Na(+)(in) = L-serine(out) + Na(+)(out). The catalysed reaction is L-threonine(in) + Na(+)(in) = L-threonine(out) + Na(+)(out). Involved in the import of serine and threonine into the cell, with the concomitant import of sodium (symport system). The polypeptide is Serine/threonine transporter SstT (Salmonella newport (strain SL254)).